The primary structure comprises 367 residues: Phosphoribosylaminoimidazole-succinocarboxamide synthase (367 aa).

This sequence belongs to the SAICAR synthetase family.

The catalysed reaction is 5-amino-1-(5-phospho-D-ribosyl)imidazole-4-carboxylate + L-aspartate + ATP = (2S)-2-[5-amino-1-(5-phospho-beta-D-ribosyl)imidazole-4-carboxamido]succinate + ADP + phosphate + 2 H(+). Its pathway is purine metabolism; IMP biosynthesis via de novo pathway; 5-amino-1-(5-phospho-D-ribosyl)imidazole-4-carboxamide from 5-amino-1-(5-phospho-D-ribosyl)imidazole-4-carboxylate: step 1/2. The polypeptide is Phosphoribosylaminoimidazole-succinocarboxamide synthase (Shewanella sp. (strain ANA-3)).